A 246-amino-acid chain; its full sequence is UDP-N-acetyl-D-mannosaminuronic acid transferase (246 aa).

This sequence belongs to the glycosyltransferase 26 family.

The enzyme catalyses UDP-N-acetyl-alpha-D-mannosaminouronate + N-acetyl-alpha-D-glucosaminyl-di-trans,octa-cis-undecaprenyl diphosphate = beta-D-ManNAcA-(1-&gt;4)-alpha-D-GlcNAc-di-trans,octa-cis-undecaprenyl diphosphate + UDP + H(+). It functions in the pathway bacterial outer membrane biogenesis; enterobacterial common antigen biosynthesis. Functionally, catalyzes the synthesis of Und-PP-GlcNAc-ManNAcA (Lipid II), the second lipid-linked intermediate involved in enterobacterial common antigen (ECA) synthesis. The chain is UDP-N-acetyl-D-mannosaminuronic acid transferase from Salmonella arizonae (strain ATCC BAA-731 / CDC346-86 / RSK2980).